Consider the following 513-residue polypeptide: MEKFEGYSEKQKSRQQYFVYPLLFQEYIYAFAHDYGLNGAEPVEIFGCNNKKFSSLLVKRLIIRMYQQNFWINSVNQPNQDRLLDHSNYFYLEFYSQILSEGFAIVVEIPLSLGQPSCSEEKEIPKFQNLQSIHSIFPFLEDKFLHLHYLSHIEIPYPIHLEILVQLLEYRIQDVPSLHLLRFFLNYYSNWNSLITSMKSYFLFKKENKRLFRFLYNSYVSEYEFFLLFLRKQSSCLRLTSSGTFLERVHFSGKMEHFWVMYPGFFRKTIWFFMDPLIHYVRYQGKAILASKGTLLLKKKWKSYLVNFSQYFLSFWTQPQRIRLNQLTNSCFDFLGYLPSVPINTLLVRNQMLENSFLIDTRMKKFDTTVPATSLVGSLSKAQFCTGSGHPISKPVWTDLSDWDILDRFGRICRNLFHYHSGSSKKRILYRLKYILRLSCARTLARKHKSTVRTFMQRLGSVFLEEFFTEEEQVFCLMFTKTTRFSFNGSHSERIWYLDIIRINDLVNPLTLN.

Belongs to the intron maturase 2 family. MatK subfamily.

Its subcellular location is the plastid. It localises to the chloroplast. Usually encoded in the trnK tRNA gene intron. Probably assists in splicing its own and other chloroplast group II introns. This chain is Maturase K, found in Panicum capillare (Witchgrass).